The primary structure comprises 421 residues: Subtilisin-like protease 2 (421 aa).

Residues 1 to 16 form the signal peptide; the sequence is MQLLNFGLLLLPFVAG. Positions 17–122 are excised as a propeptide; that stretch reads DLAPQPEPLL…VHPDQHVYLA (106 aa). Residues 36-122 form the Inhibitor I9 domain; that stretch reads QYIVTLKEGL…VHPDQHVYLA (87 aa). One can recognise a Peptidase S8 domain in the interval 131 to 421; the sequence is RWGLGYMSSK…ERKFTLPKYY (291 aa). Active-site charge relay system residues include Asp-169 and His-201. Residues Asn-248, Asn-261, and Asn-348 are each glycosylated (N-linked (GlcNAc...) asparagine). Ser-357 functions as the Charge relay system in the catalytic mechanism. Asn-388 is a glycosylation site (N-linked (GlcNAc...) asparagine).

It belongs to the peptidase S8 family.

It localises to the secreted. Its function is as follows. Secreted subtilisin-like serine protease with keratinolytic activity that contributes to pathogenicity. This Trichophyton verrucosum (strain HKI 0517) protein is Subtilisin-like protease 2 (SUB2).